A 231-amino-acid chain; its full sequence is Small ribosomal subunit protein uS3 (231 aa).

Residues 39-107 (IRELLHKELK…DVVLNIVEIR (69 aa)) form the KH type-2 domain.

The protein belongs to the universal ribosomal protein uS3 family. Part of the 30S ribosomal subunit. Forms a tight complex with proteins S10 and S14.

In terms of biological role, binds the lower part of the 30S subunit head. Binds mRNA in the 70S ribosome, positioning it for translation. The polypeptide is Small ribosomal subunit protein uS3 (Nitrobacter winogradskyi (strain ATCC 25391 / DSM 10237 / CIP 104748 / NCIMB 11846 / Nb-255)).